Reading from the N-terminus, the 231-residue chain is Regulatory protein VanR (231 aa).

One can recognise a Response regulatory domain in the interval 4–117 (KILIVDDEHE…ELIARVKAQL (114 aa)). Asp53 is subject to 4-aspartylphosphate. The ompR/PhoB-type DNA-binding region spans 131–231 (ENVIVHSGLV…VWGVGYKIEK (101 aa)).

As to quaternary structure, monomer. Phosphorylated by VanS. Dephosphorylated by VanS. Can be phosphorylated nonenzymatically by acetyl-phosphate.

It is found in the cytoplasm. In terms of biological role, member of the two-component regulatory system VanS/VanR. Binds to the promoter regions of target genes, including vanH and vanR; phosphorylation of VanR increases binding affinity to the vanH and vanR promoters significantly. DNA binding may be inhibited by the cognate sensor protein, VanS. Activates the transcription of vanH, vanA and vanX in response to vancomycin which results in vancomycin resistance. Involved in conferring vancomycin resistance. This Enterococcus faecium (Streptococcus faecium) protein is Regulatory protein VanR (vanR).